The chain runs to 475 residues: Secreted triacylglycerol lipase LIP5 (475 aa).

The first 19 residues, 1–19, serve as a signal peptide directing secretion; that stretch reads MYPCTLLMVLLCLAIMTHG. C129 and C300 form a disulfide bridge. S213 acts as the Nucleophile in catalysis. N246 and N312 each carry an N-linked (GlcNAc...) asparagine glycan. D360 is an active-site residue. N369 carries N-linked (GlcNAc...) asparagine glycosylation. The active site involves H394. N471 carries N-linked (GlcNAc...) asparagine glycosylation.

This sequence belongs to the AB hydrolase superfamily. Lipase family. Class Lip subfamily.

It catalyses the reaction a triacylglycerol + H2O = a diacylglycerol + a fatty acid + H(+). The catalysed reaction is a monoacylglycerol + H2O = glycerol + a fatty acid + H(+). The enzyme catalyses a diacylglycerol + H2O = a monoacylglycerol + a fatty acid + H(+). Functionally, secreted lipase involved in Dandruff and seborrheic dermatitis (D/SD) probably via lipase-mediated breakdown of sebaceous lipids and release of irritating free fatty acids. Has triacylglycerol lipase activity and is able to hydrolyze triolein. Mostly converts monoolein to di- and triolein, while free fatty acids are only produced in low amounts. In Malassezia globosa (strain ATCC MYA-4612 / CBS 7966) (Dandruff-associated fungus), this protein is Secreted triacylglycerol lipase LIP5.